A 396-amino-acid chain; its full sequence is Small ribosomal subunit protein uS9m (396 aa).

Lysine 287 is subject to N6-acetyllysine. The interval 374-396 (PRVRERKKPGQEGARRKFTWKKR) is disordered.

It belongs to the universal ribosomal protein uS9 family. As to quaternary structure, component of the mitochondrial small ribosomal subunit (mt-SSU). Mature mammalian 55S mitochondrial ribosomes consist of a small (28S) and a large (39S) subunit. The 28S small subunit contains a 12S ribosomal RNA (12S mt-rRNA) and 30 different proteins. The 39S large subunit contains a 16S rRNA (16S mt-rRNA), a copy of mitochondrial valine transfer RNA (mt-tRNA(Val)), which plays an integral structural role, and 52 different proteins.

The protein localises to the mitochondrion. The chain is Small ribosomal subunit protein uS9m (MRPS9) from Homo sapiens (Human).